Here is a 142-residue protein sequence, read N- to C-terminus: Ribosome-binding factor A (142 aa).

It belongs to the RbfA family. As to quaternary structure, monomer. Binds 30S ribosomal subunits, but not 50S ribosomal subunits or 70S ribosomes.

It is found in the cytoplasm. In terms of biological role, one of several proteins that assist in the late maturation steps of the functional core of the 30S ribosomal subunit. Associates with free 30S ribosomal subunits (but not with 30S subunits that are part of 70S ribosomes or polysomes). Required for efficient processing of 16S rRNA. May interact with the 5'-terminal helix region of 16S rRNA. In Leifsonia xyli subsp. xyli (strain CTCB07), this protein is Ribosome-binding factor A.